Here is a 1503-residue protein sequence, read N- to C-terminus: Lysine-specific demethylase 5B-B (1503 aa).

A JmjN domain is found at 15–56 (CPVFEPSWEEFKDPFAFINKIRPIAEKTGICKVRPPPDWQPP). The region spanning 80–170 (TRVKLNFLDQ…ILYPYNLFQS (91 aa)) is the ARID domain. The segment covering 202–211 (VPLQPSNTSA) has biased composition (polar residues). 2 disordered regions span residues 202-223 (VPLQPSNTSAPARRAKRMKTES) and 268-287 (IKELNPEPEKSKPKKKNIPP). A compositionally biased stretch (basic and acidic residues) spans 268–278 (IKELNPEPEKS). The segment at 295 to 345 (LYVCLVCGKGNDEDRLLLCDGCDDSYHTFCLIPPLTDVPKGDWRCPKCLTQ) adopts a PHD-type 1 zinc-finger fold. A JmjC domain is found at 439–605 (KYLQCGWNLN…LGRQCVDHYR (167 aa)). Residues histidine 485, aspartate 488, and histidine 573 each coordinate Fe cation. A PHD-type 2 zinc finger spans residues 1168-1216 (LKVCVCQKPAMGAMLQCELCRDAFHSVCVRGPSDPLDPEAWLCPLCLRS). 2 disordered regions span residues 1362–1381 (TNTSHAEHKSYLTPPQTETD) and 1403–1442 (ERGTKLKSKKQRMMGVEKRRERKAASVSASDMSQSEDSEE). The PHD-type 3 zinc-finger motif lies at 1444 to 1497 (MTLCPAESCLQPEGEEVDWVQCDCCNRWFHMICVGVSAELAAEEDYMCVSCSTS).

It belongs to the JARID1 histone demethylase family. Fe(2+) is required as a cofactor.

It is found in the nucleus. The enzyme catalyses N(6),N(6),N(6)-trimethyl-L-lysyl(4)-[histone H3] + 3 2-oxoglutarate + 3 O2 = L-lysyl(4)-[histone H3] + 3 formaldehyde + 3 succinate + 3 CO2. Functionally, histone demethylase that demethylates 'Lys-4' of histone H3, thereby playing a central role in histone code. Does not demethylate histone H3 'Lys-9' or H3 'Lys-27'. Demethylates trimethylated, dimethylated and monomethylated H3 'Lys-4'. Acts as a transcriptional corepressor. This Danio rerio (Zebrafish) protein is Lysine-specific demethylase 5B-B (kdm5bb).